We begin with the raw amino-acid sequence, 154 residues long: Large ribosomal subunit protein uL13 (154 aa).

The protein belongs to the universal ribosomal protein uL13 family. In terms of assembly, part of the 50S ribosomal subunit.

In terms of biological role, this protein is one of the early assembly proteins of the 50S ribosomal subunit, although it is not seen to bind rRNA by itself. It is important during the early stages of 50S assembly. The protein is Large ribosomal subunit protein uL13 of Agrobacterium fabrum (strain C58 / ATCC 33970) (Agrobacterium tumefaciens (strain C58)).